The chain runs to 424 residues: Serine--tRNA ligase 1 (424 aa).

Position 232-234 (232-234 (TAE)) interacts with L-serine. Position 263–265 (263–265 (RSE)) interacts with ATP. L-serine is bound at residue E286. 350 to 353 (EISS) contributes to the ATP binding site. S386 contacts L-serine.

Belongs to the class-II aminoacyl-tRNA synthetase family. Type-1 seryl-tRNA synthetase subfamily. Homodimer. The tRNA molecule binds across the dimer.

It is found in the cytoplasm. The catalysed reaction is tRNA(Ser) + L-serine + ATP = L-seryl-tRNA(Ser) + AMP + diphosphate + H(+). It catalyses the reaction tRNA(Sec) + L-serine + ATP = L-seryl-tRNA(Sec) + AMP + diphosphate + H(+). The protein operates within aminoacyl-tRNA biosynthesis; selenocysteinyl-tRNA(Sec) biosynthesis; L-seryl-tRNA(Sec) from L-serine and tRNA(Sec): step 1/1. Catalyzes the attachment of serine to tRNA(Ser). Is also able to aminoacylate tRNA(Sec) with serine, to form the misacylated tRNA L-seryl-tRNA(Sec), which will be further converted into selenocysteinyl-tRNA(Sec). The protein is Serine--tRNA ligase 1 of Clostridium acetobutylicum (strain ATCC 824 / DSM 792 / JCM 1419 / IAM 19013 / LMG 5710 / NBRC 13948 / NRRL B-527 / VKM B-1787 / 2291 / W).